A 99-amino-acid chain; its full sequence is Protein adenylyltransferase MntA (99 aa).

A GSX(10)DXD motif motif is present at residues 33–47 (GSYVRGEAKEDSDVD). Residues Asp45 and Asp47 contribute to the active site. 3 residues coordinate Mg(2+): Asp45, Asp47, and Asp77.

Belongs to the MntA antitoxin family. It depends on Mg(2+) as a cofactor.

The enzyme catalyses L-tyrosyl-[protein] + ATP = O-(5'-adenylyl)-L-tyrosyl-[protein] + diphosphate. It catalyses the reaction O-(5'-adenylyl)-L-tyrosyl-[protein] + ATP = O-[5'-(adenylyl-(5'-&gt;3')-adenylyl)]-L-tyrosyl-[protein] + diphosphate. Its function is as follows. Antitoxin component of a type VII toxin-antitoxin (TA) system. Overexpression in E.coli neutralizes the toxic effect of cognate toxin HepT. Neutralization is mostly due to AMPylation of the toxin by this enzyme. In Thermococcus cleftensis (strain DSM 27260 / KACC 17922 / CL1), this protein is Protein adenylyltransferase MntA.